We begin with the raw amino-acid sequence, 344 residues long: NADH-ubiquinone oxidoreductase chain 2 (344 aa).

11 helical membrane-spanning segments follow: residues 1–21 (MNPL…TITL), 24–44 (FHWL…IPLM), 59–79 (YFLT…ISAW), 94–114 (MNIL…HFWI), 121–141 (ISLP…MALL), 150–170 (LNLT…GGIG), 177–197 (IMAF…KFDP), 201–221 (LLNF…LTTI), 245–265 (LILL…KLLI), 273–293 (NATL…FFYI), and 324–344 (TAIM…LLLL).

This sequence belongs to the complex I subunit 2 family.

It localises to the mitochondrion inner membrane. The catalysed reaction is a ubiquinone + NADH + 5 H(+)(in) = a ubiquinol + NAD(+) + 4 H(+)(out). Core subunit of the mitochondrial membrane respiratory chain NADH dehydrogenase (Complex I) that is believed to belong to the minimal assembly required for catalysis. Complex I functions in the transfer of electrons from NADH to the respiratory chain. The immediate electron acceptor for the enzyme is believed to be ubiquinone. The sequence is that of NADH-ubiquinone oxidoreductase chain 2 (MT-ND2) from Aquarana catesbeiana (American bullfrog).